The chain runs to 454 residues: T-box protein VegT (454 aa).

The segment at residues L57–E230 is a DNA-binding region (T-box). The segment covering R229 to L241 has biased composition (basic and acidic residues). Disordered stretches follow at residues R229–V274 and A295–S358. The span at G308–K325 shows a compositional bias: polar residues.

As to quaternary structure, forms a repression complex on the promoters of the nodal/nr1 and siamois genes with the maternal factors tcf7l1/tcf3 and pouf5.1/oct-25. Interacts (via C-terminus) with tcf7l1/tcf3 (via N-terminus). Also interacts with the other POU-domain transcription factors pou5f1.2/oct-91 and pou5f1.3/oct-60.

It is found in the nucleus. In terms of biological role, transcription factor required for both mesoderm and endoderm formation in the embryo; signaling determinants and concentration levels may determine which germ layer is formed. Acts together with beta-catenin to activate genes that are responsible for mesoderm induction including wnt-8, eomes t/bra, siamois, mix1 and sox17. Directly binds to promoter DNA. Patterns the mesoderm along the dorsoventral and posterior axis. Activates siamois gene transcription when alone or in combination with beta-catenin, but inhibits siamois transcription in combination with pou5f1.1/oct-25. The sequence is that of T-box protein VegT from Xenopus borealis (Kenyan clawed frog).